A 331-amino-acid polypeptide reads, in one-letter code: Homoserine kinase (331 aa).

This sequence belongs to the pseudomonas-type ThrB family.

It catalyses the reaction L-homoserine + ATP = O-phospho-L-homoserine + ADP + H(+). The protein operates within amino-acid biosynthesis; L-threonine biosynthesis; L-threonine from L-aspartate: step 4/5. The protein is Homoserine kinase of Burkholderia thailandensis (strain ATCC 700388 / DSM 13276 / CCUG 48851 / CIP 106301 / E264).